We begin with the raw amino-acid sequence, 148 residues long: MSEPIKLHDLRPAKGANKPKTRVGRGEASKGKTAGRGTKGTKARKQVSAAFEGGQMPLHMRLPKLKGFKNPAKVYYQVVNVSDLEKAFPQGGEIAVADIVAKGLVRPKQPVKVLGNGEISVKLNVTATKFSKSAVEKIEAAGGSVTEA.

Positions 1–12 are enriched in basic and acidic residues; sequence MSEPIKLHDLRP. Residues 1–52 are disordered; sequence MSEPIKLHDLRPAKGANKPKTRVGRGEASKGKTAGRGTKGTKARKQVSAAFE.

It belongs to the universal ribosomal protein uL15 family. As to quaternary structure, part of the 50S ribosomal subunit.

Functionally, binds to the 23S rRNA. This Corynebacterium diphtheriae (strain ATCC 700971 / NCTC 13129 / Biotype gravis) protein is Large ribosomal subunit protein uL15.